We begin with the raw amino-acid sequence, 753 residues long: Pumilio homolog 23 (753 aa).

Residues 1–84 (MVSVGSKSLP…SEFEHQNQFV (84 aa)) form a disordered region. 3 stretches are compositionally biased toward basic and acidic residues: residues 23–38 (MGERGKSSNNHSERNK), 47–57 (GNRGFDVDSSK), and 73–84 (KHSEFEHQNQFV). Pumilio repeat units lie at residues 123–158 (ETRGREYEIATDYIISHVLQTLLEGCELDQLCSFIR), 159–198 (NSASVFPAIAMDRSGSHVAESALKSLATHLENPDAYSVIE), 206–244 (KVIVDNPLDMMCNCYGSHVLRRLLCLCKGVSLDSPELYG), 284–325 (GLLS…EIIP), 345–380 (NVAKEILESMKDNSFSHLVEVILEVAPESLYNEMFN), 381–418 (KVFKNSLFELSVDRCANFVIQALISHARDQEQMGIMWE), 526–563 (SMKAEYITETAKDSSGARVIEAFLASDAATKQKRRLII), and 564–599 (KLRGHFGELSLHTSGSFTVEKCFDACNLTLREAIAS). The 354-residue stretch at 322 to 675 (EIIPLILRCN…DASEDAAQEI (354 aa)) folds into the PUM-HD domain. 3 stretches are compositionally biased toward basic and acidic residues: residues 677 to 688 (VKNTRKEIDHHP), 699 to 712 (HAKDKDEPFAGEKR), and 719 to 728 (KTSEATDKPK). The tract at residues 677–753 (VKNTRKEIDH…KNRHSNKMRI (77 aa)) is disordered. Residues 744–753 (KNRHSNKMRI) are compositionally biased toward basic residues.

The protein resides in the nucleus. It localises to the nucleolus. Functionally, sequence-specific RNA-binding protein that regulates translation and mRNA stability by binding the 3'-UTR of target mRNAs. The chain is Pumilio homolog 23 (APUM23) from Arabidopsis thaliana (Mouse-ear cress).